Reading from the N-terminus, the 309-residue chain is tRNA uridine(34) hydroxylase (309 aa).

Residues 123–217 (DDPEVIVVDT…YLEEVPEEQT (95 aa)) form the Rhodanese domain. Residue Cys-177 is the Cysteine persulfide intermediate of the active site.

It belongs to the TrhO family.

The enzyme catalyses uridine(34) in tRNA + AH2 + O2 = 5-hydroxyuridine(34) in tRNA + A + H2O. In terms of biological role, catalyzes oxygen-dependent 5-hydroxyuridine (ho5U) modification at position 34 in tRNAs. The polypeptide is tRNA uridine(34) hydroxylase (Saccharophagus degradans (strain 2-40 / ATCC 43961 / DSM 17024)).